The sequence spans 197 residues: ATP-dependent Clp protease proteolytic subunit 1 (197 aa).

Ser-99 acts as the Nucleophile in catalysis. Residue His-124 is part of the active site.

The protein belongs to the peptidase S14 family. As to quaternary structure, fourteen ClpP subunits assemble into 2 heptameric rings which stack back to back to give a disk-like structure with a central cavity, resembling the structure of eukaryotic proteasomes.

It localises to the cytoplasm. It carries out the reaction Hydrolysis of proteins to small peptides in the presence of ATP and magnesium. alpha-casein is the usual test substrate. In the absence of ATP, only oligopeptides shorter than five residues are hydrolyzed (such as succinyl-Leu-Tyr-|-NHMec, and Leu-Tyr-Leu-|-Tyr-Trp, in which cleavage of the -Tyr-|-Leu- and -Tyr-|-Trp bonds also occurs).. In terms of biological role, cleaves peptides in various proteins in a process that requires ATP hydrolysis. Has a chymotrypsin-like activity. Plays a major role in the degradation of misfolded proteins. This chain is ATP-dependent Clp protease proteolytic subunit 1, found in Treponema denticola (strain ATCC 35405 / DSM 14222 / CIP 103919 / JCM 8153 / KCTC 15104).